Reading from the N-terminus, the 344-residue chain is DNA-directed RNA polymerase subunit alpha (344 aa).

The segment at 1–238 (MKVIKTAPLI…KQLGVFGERP (238 aa)) is alpha N-terminal domain (alpha-NTD). The alpha C-terminal domain (alpha-CTD) stretch occupies residues 254 to 344 (AKDLSAKIES…EKLEDKGGND (91 aa)).

Belongs to the RNA polymerase alpha chain family. As to quaternary structure, homodimer. The RNAP catalytic core consists of 2 alpha, 1 beta, 1 beta' and 1 omega subunit. When a sigma factor is associated with the core the holoenzyme is formed, which can initiate transcription.

It carries out the reaction RNA(n) + a ribonucleoside 5'-triphosphate = RNA(n+1) + diphosphate. Its function is as follows. DNA-dependent RNA polymerase catalyzes the transcription of DNA into RNA using the four ribonucleoside triphosphates as substrates. The polypeptide is DNA-directed RNA polymerase subunit alpha (Helicobacter pylori (strain J99 / ATCC 700824) (Campylobacter pylori J99)).